Here is a 159-residue protein sequence, read N- to C-terminus: Transcriptional repressor NrdR (159 aa).

A zinc finger spans residues 3-34; sequence CPFCRHDDTQVVDSRVSEDGAAIRRRRRCSAC. The ATP-cone domain maps to 49–139; the sequence is PAVVKKDGSR…VYRRFEDVSE (91 aa).

Belongs to the NrdR family. It depends on Zn(2+) as a cofactor.

In terms of biological role, negatively regulates transcription of bacterial ribonucleotide reductase nrd genes and operons by binding to NrdR-boxes. In Burkholderia cenocepacia (strain HI2424), this protein is Transcriptional repressor NrdR.